Consider the following 376-residue polypeptide: UDP-N-acetylglucosamine--N-acetylmuramyl-(pentapeptide) pyrophosphoryl-undecaprenol N-acetylglucosamine transferase (376 aa).

UDP-N-acetyl-alpha-D-glucosamine is bound by residues threonine 11–glycine 13, asparagine 117, arginine 160, serine 208, and glutamine 310.

The protein belongs to the glycosyltransferase 28 family. MurG subfamily.

Its subcellular location is the cell inner membrane. It carries out the reaction di-trans,octa-cis-undecaprenyl diphospho-N-acetyl-alpha-D-muramoyl-L-alanyl-D-glutamyl-meso-2,6-diaminopimeloyl-D-alanyl-D-alanine + UDP-N-acetyl-alpha-D-glucosamine = di-trans,octa-cis-undecaprenyl diphospho-[N-acetyl-alpha-D-glucosaminyl-(1-&gt;4)]-N-acetyl-alpha-D-muramoyl-L-alanyl-D-glutamyl-meso-2,6-diaminopimeloyl-D-alanyl-D-alanine + UDP + H(+). It participates in cell wall biogenesis; peptidoglycan biosynthesis. Functionally, cell wall formation. Catalyzes the transfer of a GlcNAc subunit on undecaprenyl-pyrophosphoryl-MurNAc-pentapeptide (lipid intermediate I) to form undecaprenyl-pyrophosphoryl-MurNAc-(pentapeptide)GlcNAc (lipid intermediate II). The protein is UDP-N-acetylglucosamine--N-acetylmuramyl-(pentapeptide) pyrophosphoryl-undecaprenol N-acetylglucosamine transferase of Rickettsia rickettsii (strain Iowa).